A 365-amino-acid polypeptide reads, in one-letter code: G-protein coupled receptor 68 (365 aa).

At 1-12 (MGNITTENSSLS) the chain is on the extracellular side. N3 and N8 each carry an N-linked (GlcNAc...) asparagine glycan. Residues 13–49 (CPIDHTIHQTLAPVVYVTVLVVGFPANCLSLYFGYLQ) traverse the membrane as a helical segment. Intrachain disulfides connect C13/C258 and C94/C172. Topologically, residues 50–53 (IKAR) are cytoplasmic. The helical transmembrane segment at 54–84 (NELGVYLCNLTIADLFYICSLPFWLQYVLQH) threads the bilayer. The Extracellular portion of the chain corresponds to 85-89 (DDWSH). Residues 90–125 (GDLSCQVCGILLYENIYISVGFLCCISIDRYLAVAH) form a helical membrane-spanning segment. Residues 126-133 (PFRFHQFR) lie on the Cytoplasmic side of the membrane. Residues 134–160 (TLKAAVGVSVLIWAKELLTSIYFLNHK) form a helical membrane-spanning segment. The Extracellular segment spans residues 161-176 (EVIEDEDQHRVCFEHY). The tract at residues 161 to 176 (EVIEDEDQHRVCFEHY) is extracellular loop 2 (ECL2). Residues 177–214 (PIQAWQRSINYYRFLVGFLFPICLLLASYQGILRAVRR) traverse the membrane as a helical segment. The Cytoplasmic segment spans residues 215-218 (SHGT). The chain crosses the membrane as a helical span at residues 219-254 (QKSRKDQIQRLVLSTVVIFLACFLPYHVLLLVRSLW). At 255-260 (ERNCEF) the chain is on the extracellular side. Residues 261 to 289 (AKSIFNVYHFSLLLTSFNCVADPVLYCFV) form a helical membrane-spanning segment. The Cytoplasmic segment spans residues 290–365 (SETTHRDLAR…VGGPSTVGLA (76 aa)).

It belongs to the G-protein coupled receptor 1 family. In terms of tissue distribution, expressed in the lung, testis, heart, brain, spleen, thymus, brown fat, small intestine, colon, peripheral blood leukocytes, macrophages, stomach, ovary and white fat but not in the liver, kidney, and skeletal muscle. Expression in the prostate is weak but detectable. Specifically expressed in endothelial cells of small-diameter resistance arteries.

The protein resides in the cell membrane. Activated by a network of residues that connects an extracellular-facing cavity to Glu-149, a conserved charged residue buried in the transmembrane core of the receptor. Protonation likely drives conformational changes in extracellular loop 2 (ECL2), which stabilizes movement of transmembrane 3 (TM3) and a series of rearrangements that connect the extracellular-facing cavity to Glu-149, a residue only conserved in proton-sensing G-protein coupled receptors. Activated in an allosteric manner by divalent metal ions at the extracellular surface following the order: Cd(2+) &gt; Co(2+) &gt; Ni(2+) &gt; Zn(2+) &gt; Fe(2+) &gt; Ca(2+) &gt; Mg(2+). Activated by ogerin (ZINC67740571), a selective GPR68 positive allosteric modulator. Inhibited by small molecule GPR68-I, decreasing inflammation in models of colitis. In terms of biological role, proton-sensing G-protein coupled receptor activated by extracellular pH, which is required to monitor pH changes and generate adaptive reactions. The receptor is almost silent at pH 7.8 but fully activated at pH 6.8. Ligand binding causes a conformation change that triggers signaling via guanine nucleotide-binding proteins (G proteins) and modulates the activity of downstream effectors, such as phospholipase C. GPR68 is mainly coupled to G(q) G proteins and mediates production of diacylglycerol (DAG) and inositol 1,4,5-trisphosphate (IP3). Acts as a key mechanosensor of fluid shear stress and membrane stretch. Expressed in endothelial cells of small-diameter resistance arteries, where it mediates flow-induced dilation in response to shear stress. May represents an osteoblastic pH sensor regulating cell-mediated responses to acidosis in bone. Acts as a regulator of calcium-sensing receptor CASR in a seesaw manner: GPR68-mediated signaling inhibits CASR signaling in response to protons, while CASR inhibits GPR68 in presence of extracellular calcium. Also functions as a metastasis suppressor gene in prostate cancer. In Mus musculus (Mouse), this protein is G-protein coupled receptor 68.